The primary structure comprises 316 residues: Ribosomal RNA small subunit methyltransferase A (316 aa).

S-adenosyl-L-methionine-binding residues include asparagine 33, valine 35, glycine 60, glutamate 81, aspartate 110, and asparagine 133.

The protein belongs to the class I-like SAM-binding methyltransferase superfamily. rRNA adenine N(6)-methyltransferase family. RsmA subfamily.

Its subcellular location is the cytoplasm. It catalyses the reaction adenosine(1518)/adenosine(1519) in 16S rRNA + 4 S-adenosyl-L-methionine = N(6)-dimethyladenosine(1518)/N(6)-dimethyladenosine(1519) in 16S rRNA + 4 S-adenosyl-L-homocysteine + 4 H(+). In terms of biological role, specifically dimethylates two adjacent adenosines (A1518 and A1519) in the loop of a conserved hairpin near the 3'-end of 16S rRNA in the 30S particle. May play a critical role in biogenesis of 30S subunits. This Corynebacterium jeikeium (strain K411) protein is Ribosomal RNA small subunit methyltransferase A.